The following is a 384-amino-acid chain: Galactokinase (384 aa).

Substrate is bound at residue 34–37 (EHTD). 123–129 (SSGLSSS) lines the ATP pocket. S129 and E161 together coordinate Mg(2+). Residue D173 is the Proton acceptor of the active site. Y222 is a binding site for substrate.

This sequence belongs to the GHMP kinase family. GalK subfamily.

It is found in the cytoplasm. It carries out the reaction alpha-D-galactose + ATP = alpha-D-galactose 1-phosphate + ADP + H(+). Its pathway is carbohydrate metabolism; galactose metabolism. Functionally, catalyzes the transfer of the gamma-phosphate of ATP to D-galactose to form alpha-D-galactose-1-phosphate (Gal-1-P). The sequence is that of Galactokinase from Haemophilus influenzae (strain PittGG).